The following is a 153-amino-acid chain: Ribosomal RNA large subunit methyltransferase H (153 aa).

Leucine 71 and glycine 102 together coordinate S-adenosyl-L-methionine.

It belongs to the RNA methyltransferase RlmH family. Homodimer.

The protein resides in the cytoplasm. It catalyses the reaction pseudouridine(1915) in 23S rRNA + S-adenosyl-L-methionine = N(3)-methylpseudouridine(1915) in 23S rRNA + S-adenosyl-L-homocysteine + H(+). Specifically methylates the pseudouridine at position 1915 (m3Psi1915) in 23S rRNA. The protein is Ribosomal RNA large subunit methyltransferase H of Anaeromyxobacter dehalogenans (strain 2CP-C).